Here is an 856-residue protein sequence, read N- to C-terminus: DNA mismatch repair protein MutS (856 aa).

Residue 623–630 (GPNMSGKS) coordinates ATP.

The protein belongs to the DNA mismatch repair MutS family.

This protein is involved in the repair of mismatches in DNA. It is possible that it carries out the mismatch recognition step. This protein has a weak ATPase activity. This chain is DNA mismatch repair protein MutS, found in Natronomonas pharaonis (strain ATCC 35678 / DSM 2160 / CIP 103997 / JCM 8858 / NBRC 14720 / NCIMB 2260 / Gabara) (Halobacterium pharaonis).